The chain runs to 779 residues: Phosphatidylinositol 4-phosphate 5-kinase 4 (779 aa).

The disordered stretch occupies residues 20-61 (QQAKKRANSIFGTVSVAPQTDDDATTTTEENDDETSTNRSSI). Positions 39–54 (TDDDATTTTEENDDET) are enriched in acidic residues. MORN repeat units follow at residues 77–99 (YTGQ…DGCM), 100–122 (YIGD…SGAT), 123–145 (YEGE…SGDT), 146–168 (YKGQ…NGDV), 169–191 (YDGE…DGSY), 192–214 (YMGE…DGNR), 215–237 (YDGF…DGSF), and 238–259 (YVGH…SGDD). Residues 382–775 (TISKGHRNYE…RFRDFIFKVF (394 aa)) form the PIPK domain. The tract at residues 735 to 756 (YDISKKLEHAYKSIQYDPTSIS) is activation loop.

It catalyses the reaction a 1,2-diacyl-sn-glycero-3-phospho-(1D-myo-inositol 4-phosphate) + ATP = a 1,2-diacyl-sn-glycero-3-phospho-(1D-myo-inositol-4,5-bisphosphate) + ADP + H(+). In Arabidopsis thaliana (Mouse-ear cress), this protein is Phosphatidylinositol 4-phosphate 5-kinase 4 (PIP5K4).